The chain runs to 260 residues: Imidazole glycerol phosphate synthase subunit HisF (260 aa).

Catalysis depends on residues aspartate 11 and aspartate 130.

The protein belongs to the HisA/HisF family. As to quaternary structure, heterodimer of HisH and HisF.

The protein resides in the cytoplasm. The enzyme catalyses 5-[(5-phospho-1-deoxy-D-ribulos-1-ylimino)methylamino]-1-(5-phospho-beta-D-ribosyl)imidazole-4-carboxamide + L-glutamine = D-erythro-1-(imidazol-4-yl)glycerol 3-phosphate + 5-amino-1-(5-phospho-beta-D-ribosyl)imidazole-4-carboxamide + L-glutamate + H(+). It functions in the pathway amino-acid biosynthesis; L-histidine biosynthesis; L-histidine from 5-phospho-alpha-D-ribose 1-diphosphate: step 5/9. Its function is as follows. IGPS catalyzes the conversion of PRFAR and glutamine to IGP, AICAR and glutamate. The HisF subunit catalyzes the cyclization activity that produces IGP and AICAR from PRFAR using the ammonia provided by the HisH subunit. This is Imidazole glycerol phosphate synthase subunit HisF from Caulobacter sp. (strain K31).